Here is a 228-residue protein sequence, read N- to C-terminus: D-lyxose/D-mannose isomerase (228 aa).

The Mn(2+) site is built by His103, His105, Glu110, and His171.

Belongs to the D-lyxose ketol-isomerase family. Homodimer. Mn(2+) serves as cofactor.

The catalysed reaction is D-lyxose = D-xylulose. It catalyses the reaction D-mannose = D-fructose. Sugar isomerase that catalyzes the reversible isomerization of D-lyxose to D-xylulose, and D-mannose to D-fructose. Shows optimum activity using D-lyxose as substrate, but can also effectively catalyze the isomerization between D-fructose and D-mannose. Shows lower activity with L-gulose, D-talose and L-ribose. This is D-lyxose/D-mannose isomerase from Serratia proteamaculans.